The primary structure comprises 178 residues: Ribosome rescue factor SmrB (178 aa).

In terms of domain architecture, Smr spans 99–174 (LDLHGLTQMQ…GNAALLILIE (76 aa)).

This sequence belongs to the SmrB family. In terms of assembly, associates with collided ribosomes, but not with correctly translating polysomes.

In terms of biological role, acts as a ribosome collision sensor. Detects stalled/collided disomes (pairs of ribosomes where the leading ribosome is stalled and a second ribosome has collided with it) and endonucleolytically cleaves mRNA at the 5' boundary of the stalled ribosome. Stalled/collided disomes form a new interface (primarily via the 30S subunits) that binds SmrB. Cleaved mRNA becomes available for tmRNA ligation, leading to ribosomal subunit dissociation and rescue of stalled ribosomes. This Photorhabdus laumondii subsp. laumondii (strain DSM 15139 / CIP 105565 / TT01) (Photorhabdus luminescens subsp. laumondii) protein is Ribosome rescue factor SmrB.